A 375-amino-acid polypeptide reads, in one-letter code: MSRINNADTPTNRRNLSLARGRRRLTYSPSTPMPTPRQTRAPMPTPRQRRSLTPEHVVGDRNAPLRASYTINNSRYNVHGDAEFNPPEDDDDSIIFTDHAAEQARQRAVNLHESLTTTPRSPDYSPVHSPSGQVIDSDDYNSDDDERMLEQILLESAEPPQTPQPAPEPQEDVEVLCHICSCTFTDIKNYNSNFVTSSECNHAVCFKCYVSIVFNKEAYKCSICNRTTLTCRAYNRAGYVELSTVRTVRDNKLIKQHWMQLTESNMPHNRDKTIIEELQLELADLRATTARAHHEVNMIKSDNLLLQQQVDFKNLELQQELNAKVKLQKQNDTLSAANTFLQNQLDAQVAESKIKMDQFVRQHEAFLKKFKSSVM.

The segment covering 1–12 (MSRINNADTPTN) has biased composition (polar residues). Disordered regions lie at residues 1–61 (MSRI…VGDR) and 115–142 (LTTT…DYNS). The segment at 177 to 225 (CHICSCTFTDIKNYNSNFVTSSECNHAVCFKCYVSIVFNKEAYKCSICN) adopts an RING-type zinc-finger fold. A coiled-coil region spans residues 272 to 348 (KTIIEELQLE…TFLQNQLDAQ (77 aa)).

The protein belongs to the alphabaculovirus IE2 protein family. In terms of assembly, homooligomer. Auto-ubiquitinated.

The protein resides in the host nucleus. It carries out the reaction S-ubiquitinyl-[E2 ubiquitin-conjugating enzyme]-L-cysteine + [acceptor protein]-L-lysine = [E2 ubiquitin-conjugating enzyme]-L-cysteine + N(6)-ubiquitinyl-[acceptor protein]-L-lysine.. Its function is as follows. RING-finger E3 ubiquitin ligase that plays an important regulatory role during the initial stages of infection. Migrates to specific nuclear foci early in infection supposely to prepare the sites for viral replication by targeting and ubiquitinating host proteins. The chain is E3 ubiquitin-protein ligase IE2 (IE2) from Hyphantria cunea nuclear polyhedrosis virus (HcNPV).